Reading from the N-terminus, the 347-residue chain is D-alanine--D-alanine ligase (347 aa).

The ATP-grasp domain maps to 131-333 (KRVLESAGIA…YPELIERLVD (203 aa)). 161–216 (EEKLAYPVFTKPSNMGSSVGISKSENQEELRQALKLAFRYDSRVLVEQGVNAREIE) is an ATP binding site. Mg(2+) is bound by residues D287, E300, and N302.

The protein belongs to the D-alanine--D-alanine ligase family. Requires Mg(2+) as cofactor. The cofactor is Mn(2+).

It is found in the cytoplasm. It carries out the reaction 2 D-alanine + ATP = D-alanyl-D-alanine + ADP + phosphate + H(+). Its pathway is cell wall biogenesis; peptidoglycan biosynthesis. In terms of biological role, cell wall formation. The chain is D-alanine--D-alanine ligase from Streptococcus pneumoniae (strain JJA).